Here is a 257-residue protein sequence, read N- to C-terminus: Small ribosomal subunit protein uS2 (257 aa).

This sequence belongs to the universal ribosomal protein uS2 family.

The polypeptide is Small ribosomal subunit protein uS2 (Bartonella quintana (strain Toulouse) (Rochalimaea quintana)).